The chain runs to 178 residues: Large ribosomal subunit protein uL6 (178 aa).

It belongs to the universal ribosomal protein uL6 family. Part of the 50S ribosomal subunit.

This protein binds to the 23S rRNA, and is important in its secondary structure. It is located near the subunit interface in the base of the L7/L12 stalk, and near the tRNA binding site of the peptidyltransferase center. This Streptococcus pneumoniae (strain ATCC 700669 / Spain 23F-1) protein is Large ribosomal subunit protein uL6.